The following is a 1556-amino-acid chain: uncharacterized protein (1556 aa).

The residue at position 2 (Ser-2) is an N-acetylserine. The segment covering 145-156 (NQLENRKSLERK) has biased composition (basic and acidic residues). The tract at residues 145–170 (NQLENRKSLERKPSRKRRKKNSNVND) is disordered. One can recognise a Helicase ATP-binding domain in the interval 378 to 583 (SGDYPVCAKG…MIMSYLKLHP (206 aa)). 391–398 (EEMGLGKT) contacts ATP. Phosphoserine is present on Ser-810. The disordered stretch occupies residues 810 to 850 (SEDEDEHMDERFGEKETSSGDESDREINGAKNHDNHNNDGM). 2 stretches are compositionally biased toward basic and acidic residues: residues 817–827 (MDERFGEKETS) and 834–846 (REIN…DNHN). The segment at 1239-1277 (CSICLGEVEIGAIIKCGHYFCKSCILTWLRAHSKCPICK) adopts an RING-type zinc-finger fold. Basic and acidic residues predominate over residues 1297 to 1309 (REKEIQEPRREGA). Disordered regions lie at residues 1297–1319 (REKE…SNEN) and 1508–1534 (EKSK…AKFE). Over residues 1310–1319 (DSSQDNSNEN) the composition is skewed to low complexity. Positions 1363–1531 (KLISYLRLKS…ETDNEESDDA (169 aa)) constitute a Helicase C-terminal domain. Basic and acidic residues predominate over residues 1508-1518 (EKSKKGDKYDE). Positions 1519–1529 (AQDETDNEESD) are enriched in acidic residues.

It belongs to the SNF2/RAD54 helicase family.

Its subcellular location is the nucleus. Functionally, is probably involved in a pathway contributing to genomic integrity. This is an uncharacterized protein from Saccharomyces cerevisiae (strain ATCC 204508 / S288c) (Baker's yeast).